A 101-amino-acid chain; its full sequence is Apolipoprotein C-II (101 aa).

The first 17 residues, 1 to 17 (MGTRFLLALCLVLLVLG), serve as a signal peptide directing secretion. Residues 66–74 (AVDEKLRDL) form a lipid binding region. The tract at residues 78-101 (STAAMSTYTGIFTDQVLSVLKGEE) is lipoprotein lipase cofactor.

This sequence belongs to the apolipoprotein C2 family. Post-translationally, proapolipoprotein C-II is synthesized as a sialic acid containing glycoprotein which is subsequently desialylated prior to its proteolytic processing. In terms of processing, proapolipoprotein C-II, the major form found in plasma undergoes proteolytic cleavage of its N-terminal hexapeptide to generate apolipoprotein C-II, which occurs as the minor form in plasma.

It localises to the secreted. Component of chylomicrons, very low-density lipoproteins (VLDL), low-density lipoproteins (LDL), and high-density lipoproteins (HDL) in plasma. Plays an important role in lipoprotein metabolism as an activator of lipoprotein lipase. Both proapolipoprotein C-II and apolipoprotein C-II can activate lipoprotein lipase. The sequence is that of Apolipoprotein C-II (APOC2) from Chlorocebus sabaeus (Green monkey).